Consider the following 458-residue polypeptide: UDP-N-acetylglucosamine 1-carboxyvinyltransferase (458 aa).

34–35 contributes to the phosphoenolpyruvate binding site; it reads KN. Arginine 104 lines the UDP-N-acetyl-alpha-D-glucosamine pocket. The active-site Proton donor is the cysteine 128. A 2-(S-cysteinyl)pyruvic acid O-phosphothioketal modification is found at cysteine 128. UDP-N-acetyl-alpha-D-glucosamine-binding residues include aspartate 320 and valine 342.

Belongs to the EPSP synthase family. MurA subfamily.

It localises to the cytoplasm. It catalyses the reaction phosphoenolpyruvate + UDP-N-acetyl-alpha-D-glucosamine = UDP-N-acetyl-3-O-(1-carboxyvinyl)-alpha-D-glucosamine + phosphate. It functions in the pathway cell wall biogenesis; peptidoglycan biosynthesis. Its function is as follows. Cell wall formation. Adds enolpyruvyl to UDP-N-acetylglucosamine. This chain is UDP-N-acetylglucosamine 1-carboxyvinyltransferase, found in Prochlorococcus marinus (strain NATL1A).